Consider the following 72-residue polypeptide: Small ribosomal subunit protein bS18c (72 aa).

It belongs to the bacterial ribosomal protein bS18 family. In terms of assembly, part of the 30S ribosomal subunit.

It is found in the plastid. The protein resides in the chloroplast. The sequence is that of Small ribosomal subunit protein bS18c from Emiliania huxleyi (Coccolithophore).